Consider the following 1026-residue polypeptide: Beta-galactosidase (1026 aa).

2 residues coordinate substrate: N104 and D203. D203 serves as a coordination point for Na(+). Mg(2+)-binding residues include E418, H420, and E463. Residues E463 and 539–542 (EYAH) each bind substrate. The Proton donor role is filled by E463. E539 (nucleophile) is an active-site residue. Mg(2+) is bound at residue N599. The Na(+) site is built by F603 and N606. Substrate-binding residues include N606 and W1002.

The protein belongs to the glycosyl hydrolase 2 family. In terms of assembly, homotetramer. Mg(2+) is required as a cofactor. The cofactor is Na(+).

The catalysed reaction is Hydrolysis of terminal non-reducing beta-D-galactose residues in beta-D-galactosides.. The chain is Beta-galactosidase from Erwinia tasmaniensis (strain DSM 17950 / CFBP 7177 / CIP 109463 / NCPPB 4357 / Et1/99).